Consider the following 508-residue polypeptide: H/ACA ribonucleoprotein complex subunit 4 (508 aa).

The disordered stretch occupies residues 1–29 (MADVEVRKEKKKKKIKEEPLDGDDIGTLQ). The active-site Nucleophile is the aspartate 123. Residues 294-369 (HKRIIMKDSS…VVAKIKRVIM (76 aa)) form the PUA domain. Positions 423-508 (AAQEVSPTNG…KDRDRDEAQE (86 aa)) are disordered. A Phosphoserine modification is found at serine 442. Positions 442–457 (STSSVEETAAAAVSEE) are enriched in low complexity. Threonine 443 is subject to Phosphothreonine. Residues serine 444 and serine 445 each carry the phosphoserine modification. Threonine 449 carries the phosphothreonine modification. Serine 455 carries the post-translational modification Phosphoserine. Threonine 458 carries the phosphothreonine modification. Over residues 475-485 (EAPEAAEEEAE) the composition is skewed to acidic residues. Residues 499–508 (KDRDRDEAQE) are compositionally biased toward basic and acidic residues.

The protein belongs to the pseudouridine synthase TruB family. Component of the box H/ACA small nucleolar ribonucleoprotein (H/ACA snoRNP) complex consisting of Nop60B, Gar1, NPH2 and Nop10, and associated with H/ACA-type snoRNAs. As to expression, expressed at higher levels in females than in males. In terms of tissue distribution, expressed almost exclusively in females with high levels of expression in the ovary.

Its subcellular location is the nucleus. The protein localises to the nucleolus. The catalysed reaction is a uridine in RNA = a pseudouridine in RNA. Functionally, catalytic subunit of the box H/ACA small nucleolar ribonucleoprotein (H/ACA snoRNP) complex, which catalyzes pseudouridylation of rRNA. This involves the isomerization of uridine such that the ribose is subsequently attached to C5, instead of the normal N1. Pseudouridine ('psi') residues may serve to stabilize the conformation of rRNAs. Required for ribosome biogenesis; plays a central role in ribosomal RNA processing. H/ACA snoRNP complex-dependent ribosome biogenesis is important in female germline cell differentiation during oogenesis. Essential for viability and female fertility. Required for maintenance of the germline stem cell lineage during spermatogenesis. The sequence is that of H/ACA ribonucleoprotein complex subunit 4 from Drosophila melanogaster (Fruit fly).